Consider the following 153-residue polypeptide: Insulin-like growth factor 1 (153 aa).

Residues 49 to 77 (GPETLCGAELVDALQFVCGDRGFYFNKPT) form a b region. 3 cysteine pairs are disulfide-bonded: Cys-54-Cys-96, Cys-66-Cys-109, and Cys-95-Cys-100. Residues 78-89 (GYGSSSRRAPQT) are c. An a region spans residues 90–110 (GIVDECCFRSCDLRRLEMYCA). The segment at 111-118 (PLKPAKSA) is d. The propeptide at 119–153 (RSVRAQRHTDMPKAQKEVHLKNASRGSAGNKNYRM) is e peptide. Residues 120-153 (SVRAQRHTDMPKAQKEVHLKNASRGSAGNKNYRM) are disordered. Residues 125-138 (RHTDMPKAQKEVHL) show a composition bias toward basic and acidic residues. The span at 142–153 (SRGSAGNKNYRM) shows a compositional bias: polar residues.

It belongs to the insulin family. In terms of assembly, forms a ternary complex with IGFR1 and ITGAV:ITGB3. Forms a ternary complex with IGFR1 and ITGA6:ITGB4. Forms a ternary complex with IGFBP3 and ALS.

The protein resides in the secreted. In terms of biological role, the insulin-like growth factors, isolated from plasma, are structurally and functionally related to insulin but have a much higher growth-promoting activity. May be a physiological regulator of [1-14C]-2-deoxy-D-glucose (2DG) transport and glycogen synthesis in osteoblasts. Stimulates glucose transport in bone-derived osteoblastic (PyMS) cells and is effective at much lower concentrations than insulin, not only regarding glycogen and DNA synthesis but also with regard to enhancing glucose uptake. May play a role in synapse maturation. Ca(2+)-dependent exocytosis of IGF1 is required for sensory perception of smell in the olfactory bulb. Acts as a ligand for IGF1R. Binds to the alpha subunit of IGF1R, leading to the activation of the intrinsic tyrosine kinase activity which autophosphorylates tyrosine residues in the beta subunit thus initiating a cascade of down-stream signaling events leading to activation of the PI3K-AKT/PKB and the Ras-MAPK pathways. Binds to integrins ITGAV:ITGB3 and ITGA6:ITGB4. Its binding to integrins and subsequent ternary complex formation with integrins and IGFR1 are essential for IGF1 signaling. Induces the phosphorylation and activation of IGFR1, MAPK3/ERK1, MAPK1/ERK2 and AKT1. As part of the MAPK/ERK signaling pathway, acts as a negative regulator of apoptosis in cardiomyocytes via promotion of STUB1/CHIP-mediated ubiquitination and degradation of ICER-type isoforms of CREM. This chain is Insulin-like growth factor 1, found in Canis lupus familiaris (Dog).